The sequence spans 415 residues: Putative ankyrin repeat protein FPV034 (415 aa).

ANK repeat units lie at residues 12-41 (ICIKLLEQAIELKDYIVVRMILNQQENINT), 43-72 (KHFNMLRKAVLNHDHNLVNIFIDKNFNINI), 76-105 (VGYTLLRYAVEVDDVNIAKILLDAGSIINK), 107-135 (DYRLLHSAITHENKKMIELLCLHGININV), 139-168 (KGYTALYYTICNNNYDMVCFLLEKNADISI), 170-200 (NKYSMLHFLSTSNKYHNVMAVLLDKGIDVNI), 203-232 (HVKAPIHVAVERNNIYGTMLLINRNADVNI), 237-266 (GGRTSLHLAIKERNYEAAFVLINNGANVDS), 270-299 (VGNTPIFIAASLQDVRFMKLLLDNGADINV), and 303-332 (FGETPVNMVITGGSKEVTQYTVSYLISLKV).

The sequence is that of Putative ankyrin repeat protein FPV034 (ANK2) from Fowlpox virus (strain NVSL) (FPV).